Here is a 204-residue protein sequence, read N- to C-terminus: Acyl-homoserine-lactone synthase (204 aa).

Belongs to the autoinducer synthase family.

It carries out the reaction a fatty acyl-[ACP] + S-adenosyl-L-methionine = an N-acyl-L-homoserine lactone + S-methyl-5'-thioadenosine + holo-[ACP] + H(+). In terms of biological role, required for the synthesis of acyl-HSL autoinducers that bind to SolR. This Ralstonia nicotianae (strain ATCC BAA-1114 / GMI1000) (Ralstonia solanacearum) protein is Acyl-homoserine-lactone synthase (solI).